The primary structure comprises 301 residues: Probable alpha-L-glutamate ligase (301 aa).

Positions 104 to 287 constitute an ATP-grasp domain; it reads LQFLSRKGID…IAGMIIEFIE (184 aa). Residues K141, 178–179, D187, and 211–213 contribute to the ATP site; these read EF and RSN. Positions 248, 260, and 262 each coordinate Mg(2+). Residues D248, E260, and N262 each contribute to the Mn(2+) site.

It belongs to the RimK family. Mg(2+) is required as a cofactor. The cofactor is Mn(2+).

The chain is Probable alpha-L-glutamate ligase from Coxiella burnetii (strain CbuK_Q154) (Coxiella burnetii (strain Q154)).